The sequence spans 304 residues: Recombination-associated protein RdgC (304 aa).

The protein belongs to the RdgC family.

The protein resides in the cytoplasm. It is found in the nucleoid. Functionally, may be involved in recombination. This Paraburkholderia phymatum (strain DSM 17167 / CIP 108236 / LMG 21445 / STM815) (Burkholderia phymatum) protein is Recombination-associated protein RdgC.